Consider the following 88-residue polypeptide: Small ribosomal subunit protein bS18 (88 aa).

The disordered stretch occupies residues 1–22 (MSTKNAKPKKEAQRRPSRKAKV).

This sequence belongs to the bacterial ribosomal protein bS18 family. Part of the 30S ribosomal subunit. Forms a tight heterodimer with protein bS6.

Its function is as follows. Binds as a heterodimer with protein bS6 to the central domain of the 16S rRNA, where it helps stabilize the platform of the 30S subunit. This chain is Small ribosomal subunit protein bS18 (rpsR), found in Thermus thermophilus.